The sequence spans 493 residues: Glutamate--tRNA ligase (493 aa).

Residues 10–20 (PSPTGTPHVGL) carry the 'HIGH' region motif. The 'KMSKS' region signature appears at 254 to 258 (KLSKR). Lysine 257 is a binding site for ATP.

Belongs to the class-I aminoacyl-tRNA synthetase family. Glutamate--tRNA ligase type 1 subfamily. As to quaternary structure, monomer.

The protein localises to the cytoplasm. The enzyme catalyses tRNA(Glu) + L-glutamate + ATP = L-glutamyl-tRNA(Glu) + AMP + diphosphate. In terms of biological role, catalyzes the attachment of glutamate to tRNA(Glu) in a two-step reaction: glutamate is first activated by ATP to form Glu-AMP and then transferred to the acceptor end of tRNA(Glu). This chain is Glutamate--tRNA ligase, found in Corynebacterium efficiens (strain DSM 44549 / YS-314 / AJ 12310 / JCM 11189 / NBRC 100395).